The chain runs to 863 residues: Leucine--tRNA ligase (863 aa).

Residues 42-52 (PYPSGRLHMGH) carry the 'HIGH' region motif. A 'KMSKS' region motif is present at residues 622-626 (KMSKS). Lys625 contacts ATP.

It belongs to the class-I aminoacyl-tRNA synthetase family.

The protein resides in the cytoplasm. The catalysed reaction is tRNA(Leu) + L-leucine + ATP = L-leucyl-tRNA(Leu) + AMP + diphosphate. In Shewanella sediminis (strain HAW-EB3), this protein is Leucine--tRNA ligase.